The sequence spans 770 residues: DEAD-box ATP-dependent RNA helicase 24 (770 aa).

Residues 1-106 (MSKRPKLGGF…ADSDDEDDPV (106 aa)) form a disordered region. The span at 14–26 (RPTSYSFERSQPP) shows a compositional bias: polar residues. Residues 34–43 (DDPDLDDIAF) show a composition bias toward acidic residues. Residues 44–55 (SDDAAAPSDAPP) show a composition bias toward low complexity. The Q motif motif lies at 219–247 (KSFADCGFPVQLMNAIAKQGYEKPTTIQC). The Helicase ATP-binding domain maps to 250–425 (LPIVLSGRDI…REILTDPIRV (176 aa)). Position 263 to 270 (263 to 270 (AKTGSGKT)) interacts with ATP. The DEAD box signature appears at 373-376 (DEAD). Positions 436–599 (DIKQVVNVLP…DVPNELMDLA (164 aa)) constitute a Helicase C-terminal domain. Residues 604 to 613 (RFRANRDSRK) show a composition bias toward basic and acidic residues. Disordered regions lie at residues 604–640 (RFRANRDSRKGGKKSGKGKGGGGGGGGGSGARGRGRG), 683–704 (VSASSSNTPSNSAPSRGAPSSF), and 729–770 (LPAP…GWDR). Positions 621–635 (GKGGGGGGGGGSGAR) are enriched in gly residues. Residues 683–697 (VSASSSNTPSNSAPS) are compositionally biased toward low complexity. Over residues 744–753 (TVENANPNPE) the composition is skewed to polar residues. The span at 754–770 (SSRDRTRERKRPSGWDR) shows a compositional bias: basic and acidic residues.

This sequence belongs to the DEAD box helicase family.

It carries out the reaction ATP + H2O = ADP + phosphate + H(+). In Oryza sativa subsp. japonica (Rice), this protein is DEAD-box ATP-dependent RNA helicase 24.